We begin with the raw amino-acid sequence, 388 residues long: S-adenosylmethionine synthase (388 aa).

His16 contacts ATP. Asp18 provides a ligand contact to Mg(2+). Residue Glu44 coordinates K(+). L-methionine is bound by residues Glu57 and Gln100. The flexible loop stretch occupies residues 100–110 (QSADIAQGVNE). Residues 167-169 (DAK), 233-234 (RF), Asp242, 248-249 (RK), Ala265, and Lys269 contribute to the ATP site. Asp242 contacts L-methionine. Lys273 is a binding site for L-methionine.

It belongs to the AdoMet synthase family. In terms of assembly, homotetramer; dimer of dimers. It depends on Mg(2+) as a cofactor. K(+) is required as a cofactor.

It localises to the cytoplasm. The catalysed reaction is L-methionine + ATP + H2O = S-adenosyl-L-methionine + phosphate + diphosphate. It participates in amino-acid biosynthesis; S-adenosyl-L-methionine biosynthesis; S-adenosyl-L-methionine from L-methionine: step 1/1. Its function is as follows. Catalyzes the formation of S-adenosylmethionine (AdoMet) from methionine and ATP. The overall synthetic reaction is composed of two sequential steps, AdoMet formation and the subsequent tripolyphosphate hydrolysis which occurs prior to release of AdoMet from the enzyme. This is S-adenosylmethionine synthase from Aromatoleum aromaticum (strain DSM 19018 / LMG 30748 / EbN1) (Azoarcus sp. (strain EbN1)).